Here is a 242-residue protein sequence, read N- to C-terminus: Ribosomal RNA large subunit methyltransferase E (242 aa).

S-adenosyl-L-methionine contacts are provided by G88, W90, D111, D127, and D151. Catalysis depends on K191, which acts as the Proton acceptor.

This sequence belongs to the class I-like SAM-binding methyltransferase superfamily. RNA methyltransferase RlmE family.

The protein resides in the cytoplasm. The catalysed reaction is uridine(2552) in 23S rRNA + S-adenosyl-L-methionine = 2'-O-methyluridine(2552) in 23S rRNA + S-adenosyl-L-homocysteine + H(+). Its function is as follows. Specifically methylates the uridine in position 2552 of 23S rRNA at the 2'-O position of the ribose in the fully assembled 50S ribosomal subunit. The polypeptide is Ribosomal RNA large subunit methyltransferase E (Bartonella tribocorum (strain CIP 105476 / IBS 506)).